A 128-amino-acid polypeptide reads, in one-letter code: Large ribosomal subunit protein uL22 (128 aa).

It belongs to the universal ribosomal protein uL22 family. In terms of assembly, part of the 50S ribosomal subunit.

In terms of biological role, this protein binds specifically to 23S rRNA; its binding is stimulated by other ribosomal proteins, e.g. L4, L17, and L20. It is important during the early stages of 50S assembly. It makes multiple contacts with different domains of the 23S rRNA in the assembled 50S subunit and ribosome. Functionally, the globular domain of the protein is located near the polypeptide exit tunnel on the outside of the subunit, while an extended beta-hairpin is found that lines the wall of the exit tunnel in the center of the 70S ribosome. This is Large ribosomal subunit protein uL22 from Nitrobacter hamburgensis (strain DSM 10229 / NCIMB 13809 / X14).